A 558-amino-acid chain; its full sequence is Potassium-transporting ATPase potassium-binding subunit (558 aa).

The next 11 helical transmembrane spans lie at 1-21 (MDTL…VLIH), 59-79 (PAYL…VYGL), 85-105 (FLPY…NTAV), 130-150 (GLAV…IALV), 179-199 (LSLV…FAGF), 245-265 (PTAW…FSLP), 279-299 (TAIV…LTIF), 374-394 (GLYG…LLVG), 416-436 (ILVT…IPAV), 484-504 (ALGV…LALA), and 527-547 (FVGL…FPVL).

Belongs to the KdpA family. In terms of assembly, the system is composed of three essential subunits: KdpA, KdpB and KdpC.

Its subcellular location is the cell membrane. Functionally, part of the high-affinity ATP-driven potassium transport (or Kdp) system, which catalyzes the hydrolysis of ATP coupled with the electrogenic transport of potassium into the cytoplasm. This subunit binds the extracellular potassium ions and delivers the ions to the membrane domain of KdpB through an intramembrane tunnel. The polypeptide is Potassium-transporting ATPase potassium-binding subunit (Clavibacter michiganensis subsp. michiganensis (strain NCPPB 382)).